The primary structure comprises 223 residues: Small ribosomal subunit protein uS3 (223 aa).

The KH type-2 domain maps to 39–108; it reads IRNFVKKNSY…NILINIVEVK (70 aa).

This sequence belongs to the universal ribosomal protein uS3 family. As to quaternary structure, part of the 30S ribosomal subunit. Forms a tight complex with proteins S10 and S14.

Its function is as follows. Binds the lower part of the 30S subunit head. Binds mRNA in the 70S ribosome, positioning it for translation. The polypeptide is Small ribosomal subunit protein uS3 (Clostridium botulinum (strain Okra / Type B1)).